The chain runs to 192 residues: Pyridoxal 5'-phosphate synthase subunit PdxT (192 aa).

G46–S48 is an L-glutamine binding site. C75 acts as the Nucleophile in catalysis. Residues R101 and I129–R130 contribute to the L-glutamine site. Residues H166 and E168 each act as charge relay system in the active site.

This sequence belongs to the glutaminase PdxT/SNO family. In terms of assembly, in the presence of PdxS, forms a dodecamer of heterodimers. Only shows activity in the heterodimer.

It carries out the reaction aldehydo-D-ribose 5-phosphate + D-glyceraldehyde 3-phosphate + L-glutamine = pyridoxal 5'-phosphate + L-glutamate + phosphate + 3 H2O + H(+). The catalysed reaction is L-glutamine + H2O = L-glutamate + NH4(+). It functions in the pathway cofactor biosynthesis; pyridoxal 5'-phosphate biosynthesis. Its function is as follows. Catalyzes the hydrolysis of glutamine to glutamate and ammonia as part of the biosynthesis of pyridoxal 5'-phosphate. The resulting ammonia molecule is channeled to the active site of PdxS. The protein is Pyridoxal 5'-phosphate synthase subunit PdxT of Staphylococcus carnosus (strain TM300).